We begin with the raw amino-acid sequence, 308 residues long: tRNA pseudouridine synthase B (308 aa).

The active-site Nucleophile is Asp-37.

Belongs to the pseudouridine synthase TruB family. Type 1 subfamily.

It catalyses the reaction uridine(55) in tRNA = pseudouridine(55) in tRNA. Its function is as follows. Responsible for synthesis of pseudouridine from uracil-55 in the psi GC loop of transfer RNAs. This is tRNA pseudouridine synthase B from Deinococcus radiodurans (strain ATCC 13939 / DSM 20539 / JCM 16871 / CCUG 27074 / LMG 4051 / NBRC 15346 / NCIMB 9279 / VKM B-1422 / R1).